The primary structure comprises 2465 residues: Protein DOP1A (2465 aa).

Disordered regions lie at residues 559–600 (PSGQ…SSES), 625–646 (GAAA…TVGS), and 705–733 (TEHQ…KEKN). Positions 633-646 (STSSETETASTVGS) are enriched in low complexity. Residues 707-733 (HQGDLGREQGETSKWDRNSQGDVKEKN) show a composition bias toward basic and acidic residues. At Ser-1266 the chain carries Phosphoserine. Basic and acidic residues-rich tracts occupy residues 1282–1291 (EKETIVKESG) and 1305–1315 (KKDDDKKKSSN). The disordered stretch occupies residues 1282–1315 (EKETIVKESGKQPGAKPKVKLARKKDDDKKKSSN).

The protein belongs to the DOP1 family.

It is found in the golgi apparatus membrane. May be involved in protein traffic between late Golgi and early endosomes. The polypeptide is Protein DOP1A (Homo sapiens (Human)).